The following is a 448-amino-acid chain: Immunoglobulin G-binding protein G (448 aa).

The first 33 residues, 1–33 (MEKEKKVKYFLRKSAFGLASVSAAFLVGSTVFA), serve as a signal peptide directing secretion. 4 repeat units span residues 104–140 (LAKAKADALKEFNKYGVSDYYKNLINNAKTVEGIKDL), 179–215 (LAEAKVLANRELDKYGVSDYHKNLINNAKTVEGVKEL), 228–282 (TYKL…TVTE), and 298–352 (TYKL…TVTE). Residues 104 to 215 (LAKAKADALK…AKTVEGVKEL (112 aa)) are 2 X 37 AA repeats. The interval 228 to 352 (TYKLILNGKT…DATKTFTVTE (125 aa)) is 2 X 55 AA repeats. The disordered stretch occupies residues 358 to 422 (PGDAPTEPEK…TLPTTGEGSN (65 aa)). Residues 384 to 412 (AKDDAKKDDTKKEDAKKPEAKKDDAKKAE) show a composition bias toward basic and acidic residues. Residues 386–410 (DDAKKDDTKKEDAKKPEAKKDDAKK) form a 5 X 5 AA repeats of [DE]-D-A-K-K region. The LPXTG sorting signal motif lies at 414 to 418 (LPTTG). Position 417 is a pentaglycyl murein peptidoglycan amidated threonine (threonine 417). Residues 418 to 448 (GEGSNPFFTAAALAVMAGAGALAVASKRKED) constitute a propeptide, removed by sortase.

Its subcellular location is the secreted. It localises to the cell wall. Binds to the constant Fc region of IgG with high affinity. The polypeptide is Immunoglobulin G-binding protein G (spg) (Streptococcus sp. group G).